The sequence spans 492 residues: N-succinylglutamate 5-semialdehyde dehydrogenase (492 aa).

Position 220–225 (220–225) interacts with NAD(+); that stretch reads GSANTG. Active-site residues include glutamate 243 and cysteine 277.

Belongs to the aldehyde dehydrogenase family. AstD subfamily.

It catalyses the reaction N-succinyl-L-glutamate 5-semialdehyde + NAD(+) + H2O = N-succinyl-L-glutamate + NADH + 2 H(+). It participates in amino-acid degradation; L-arginine degradation via AST pathway; L-glutamate and succinate from L-arginine: step 4/5. Catalyzes the NAD-dependent reduction of succinylglutamate semialdehyde into succinylglutamate. This is N-succinylglutamate 5-semialdehyde dehydrogenase from Escherichia coli (strain SE11).